The chain runs to 647 residues: Frizzled-1 (647 aa).

An N-terminal signal peptide occupies residues 1–69 (MAEEEAPKKS…WLLEAPLLLG (69 aa)). The Extracellular portion of the chain corresponds to 73–322 (QAAGQGPGQG…PEELRFSRTW (250 aa)). The segment at 74 to 104 (AAGQGPGQGPGPGQQPPPPPQQQQSGQQYNG) is disordered. The region spanning 111–230 (PDHGYCQPIS…HGAGELCVGQ (120 aa)) is the FZ domain. 5 disulfides stabilise this stretch: Cys116/Cys177, Cys124/Cys170, Cys161/Cys198, Cys187/Cys227, and Cys191/Cys215. Asn130 carries an N-linked (GlcNAc...) asparagine glycan. Asn231 is a glycosylation site (N-linked (GlcNAc...) asparagine). Residues 323-343 (IGIWSVLCCASTLFTVLTYLV) form a helical membrane-spanning segment. Topologically, residues 344-354 (DMRRFSYPERP) are cytoplasmic. The chain crosses the membrane as a helical span at residues 355 to 375 (IIFLSGCYTAVAVAYIAGFLL). The Extracellular portion of the chain corresponds to 376–402 (EDRVVCNDKFAEDGARTVAQGTKKEGC). The chain crosses the membrane as a helical span at residues 403–423 (TILFMMLYFFSMASSIWWVIL). Residues 424–445 (SLTWFLAAGMKWGHEAIEANSQ) are Cytoplasmic-facing. Residues 446–466 (YFHLAAWAVPAIKTITILALG) form a helical membrane-spanning segment. The Extracellular portion of the chain corresponds to 467 to 489 (QVDGDVLSGVCFVGLNNVDALRG). A helical membrane pass occupies residues 490-510 (FVLAPLFVYLFIGTSFLLAGF). At 511–536 (VSLFRIRTIMKHDGTKTEKLEKLMVR) the chain is on the cytoplasmic side. The helical transmembrane segment at 537 to 557 (IGVFSVLYTVPATIVIACYFY) threads the bilayer. The Extracellular segment spans residues 558–601 (EQAFRDQWERSWVAQSCKSYAIPCPHLQAGGGAPPHPPMSPDFT). Residues 602 to 622 (VFMIKYLMTLIVGITSGFWIW) traverse the membrane as a helical segment. Residues 623-647 (SGKTLNSWRKFYTRLTNSKQGETTV) lie on the Cytoplasmic side of the membrane. The Lys-Thr-X-X-X-Trp motif, mediates interaction with the PDZ domain of Dvl family members motif lies at 625-630 (KTLNSW). The short motif at 645-647 (TTV) is the PDZ-binding element.

This sequence belongs to the G-protein coupled receptor Fz/Smo family. Interacts with MYOC. Interacts with WNT7B. In terms of assembly, (Microbial infection) Interacts with C.difficile toxin TcdB; frizzled receptors constitute the major host receptors for TcdB in the colonic epithelium. In terms of processing, ubiquitinated by ZNRF3, leading to its degradation by the proteasome. In terms of tissue distribution, expressed in adult heart, placenta, lung, kidney, pancreas, prostate, and ovary and in fetal lung and kidney.

It is found in the cell membrane. Functionally, receptor for Wnt proteins. Activated by WNT3A, WNT3, WNT1 and to a lesser extent WNT2, but apparently not by WNT4, WNT5A, WNT5B, WNT6, WNT7A or WNT7B. Contradictory results showing activation by WNT7B have been described for mouse. Functions in the canonical Wnt/beta-catenin signaling pathway. The canonical Wnt/beta-catenin signaling pathway leads to the activation of disheveled proteins, inhibition of GSK-3 kinase, nuclear accumulation of beta-catenin and activation of Wnt target genes. A second signaling pathway involving PKC and calcium fluxes has been seen for some family members, but it is not yet clear if it represents a distinct pathway or if it can be integrated in the canonical pathway, as PKC seems to be required for Wnt-mediated inactivation of GSK-3 kinase. Both pathways seem to involve interactions with G-proteins. May be involved in transduction and intercellular transmission of polarity information during tissue morphogenesis and/or in differentiated tissues. Its function is as follows. (Microbial infection) Acts as a receptor for C.difficile toxin TcdB in the colonic epithelium. The protein is Frizzled-1 (FZD1) of Homo sapiens (Human).